Reading from the N-terminus, the 157-residue chain is 2-C-methyl-D-erythritol 2,4-cyclodiphosphate synthase (157 aa).

A divalent metal cation-binding residues include Asp-8 and His-10. 4-CDP-2-C-methyl-D-erythritol 2-phosphate is bound by residues 8–10 and 34–35; these read DVH and HS. His-42 provides a ligand contact to a divalent metal cation. Residues 56-58, 61-65, 100-106, 132-135, and Phe-139 contribute to the 4-CDP-2-C-methyl-D-erythritol 2-phosphate site; these read DIG, FPDTD, AQKPKMA, and TTTE.

It belongs to the IspF family. As to quaternary structure, homotrimer. The cofactor is a divalent metal cation.

It carries out the reaction 4-CDP-2-C-methyl-D-erythritol 2-phosphate = 2-C-methyl-D-erythritol 2,4-cyclic diphosphate + CMP. Its pathway is isoprenoid biosynthesis; isopentenyl diphosphate biosynthesis via DXP pathway; isopentenyl diphosphate from 1-deoxy-D-xylulose 5-phosphate: step 4/6. Involved in the biosynthesis of isopentenyl diphosphate (IPP) and dimethylallyl diphosphate (DMAPP), two major building blocks of isoprenoid compounds. Catalyzes the conversion of 4-diphosphocytidyl-2-C-methyl-D-erythritol 2-phosphate (CDP-ME2P) to 2-C-methyl-D-erythritol 2,4-cyclodiphosphate (ME-CPP) with a corresponding release of cytidine 5-monophosphate (CMP). In Alkaliphilus oremlandii (strain OhILAs) (Clostridium oremlandii (strain OhILAs)), this protein is 2-C-methyl-D-erythritol 2,4-cyclodiphosphate synthase.